The chain runs to 86 residues: Serine protease inhibitor Kazal-type 2 (86 aa).

The signal sequence occupies residues 1 to 16 (MLRLVLLLLATDFAAS). Positions 32–86 (QFRTPDCHRFDYPVCSKHLSPVCGTDMNTYGNECTLCMKIREDGSHINIIKDEPC) constitute a Kazal-like domain. 3 disulfides stabilise this stretch: cysteine 38/cysteine 68, cysteine 46/cysteine 65, and cysteine 54/cysteine 86.

The protein localises to the secreted. Its subcellular location is the cytoplasmic vesicle. It is found in the secretory vesicle. The protein resides in the acrosome. Functionally, as a strong inhibitor of acrosin, it is required for normal spermiogenesis. It probably hinders premature activation of proacrosin and other proteases, thus preventing the cascade of events leading to spermiogenesis defects. May be involved in the regulation of serine protease-dependent germ cell apoptosis. It also inhibits trypsin. In Rattus norvegicus (Rat), this protein is Serine protease inhibitor Kazal-type 2 (Spink2).